Reading from the N-terminus, the 703-residue chain is MIVKKYQMEVAGRPLIVEIGQVAQQANGAALMRYGDTVVLVTATAAKQPREGIDFFPLTVDYEEKQYAVGKIPGGFIKREGRATAQATLSARLIDRPIRPLFPKGFRNEIHVVATILSVEKDNAPDVTAITGASVALSISDIPFAGPVAAVIVGLVDGELIINPTVEQHQKSDLHLAVAGTKEAIMMVEGGANEVPEETMRDAIFFAHEEIKKIVDFQENIIREVGLSKMQVEIPILDEEIKKAVVEFATPLFEEAVKNPDKKTREDQMDSSQKSVLQHFTESYPEEEKLIADVSDETMKAVVRKMALEEGERVDGRKLDEIRKVSCEVGFLPRPHGSGLFTRGQTQVLSVTTLGAISEEQRLDGLGIEEKKRYIHHYNFPPYSTGETKPMRGPGRREIGHGALAERALLAVIPSEEEFPYTIRVVSEVLESNGSSSMGSVCGSTLSLMHAGVPIKAPVSGIAMGLVKEGERFAIMSDIQGIEDALGDMDFKLAGTEKGVTALQMDIKITGVNREIVEAALKQAREGRMFILKKMLEAIDKPNEELSPYAPQMIRMQIDPDKIREVIGPGGKTIHKIVDETGCKIDIEDDGSLFIMATDEEAAKKARFFVESIVAEVEVGKTYMGTVKRIMDFGAFVEIIPGVLGTSGKEGLVHISQLAEERVNKVRDVVDIGDQILVKVTEIDRQGRVNLSRKAVLKSAVKK.

The Mg(2+) site is built by Asp-484 and Asp-490. The 60-residue stretch at 551 to 610 (PQMIRMQIDPDKIREVIGPGGKTIHKIVDETGCKIDIEDDGSLFIMATDEEAAKKARFFV) folds into the KH domain. In terms of domain architecture, S1 motif spans 620–694 (GKTYMGTVKR…RQGRVNLSRK (75 aa)).

Belongs to the polyribonucleotide nucleotidyltransferase family. It depends on Mg(2+) as a cofactor.

It is found in the cytoplasm. The enzyme catalyses RNA(n+1) + phosphate = RNA(n) + a ribonucleoside 5'-diphosphate. Functionally, involved in mRNA degradation. Catalyzes the phosphorolysis of single-stranded polyribonucleotides processively in the 3'- to 5'-direction. The chain is Polyribonucleotide nucleotidyltransferase from Syntrophomonas wolfei subsp. wolfei (strain DSM 2245B / Goettingen).